The primary structure comprises 95 residues: Probable FAD-linked sulfhydryl oxidase OPG072 (95 aa).

The Intravirion portion of the chain corresponds to 1 to 8; it reads MNPKHWGR. One can recognise an ERV/ALR sulfhydryl oxidase domain in the interval 1 to 95; that stretch reads MNPKHWGRAV…AIDVTKVNPL (95 aa). A helical transmembrane segment spans residues 9–25; it reads AVWTIIFIVLSQAGLDG. Topologically, residues 26–95 are virion surface; sequence NIEACKRKLY…AIDVTKVNPL (70 aa). A disulfide bond links Cys-43 and Cys-46.

The protein belongs to the orthopoxvirus OPG072 family. Interacts with OPG128/A2.5; this interaction involves formation of a transient disulfide-bonded intermediate, allowing disulfide bond transfer. FAD is required as a cofactor.

The protein localises to the virion membrane. It localises to the host cytoplasm. It catalyses the reaction 2 R'C(R)SH + O2 = R'C(R)S-S(R)CR' + H2O2. In terms of biological role, FAD-dependent sulfhydryl oxidase that catalyzes disulfide bond formation. The complete pathway for formation of disulfide bonds in intracellular virion membrane proteins sequentially involves thiol-disulfide transfer between OPG072/E10, OPG128/A2.5 and OPG088/G4. The sequence is that of Probable FAD-linked sulfhydryl oxidase OPG072 (OPG072) from Bos taurus (Bovine).